The chain runs to 217 residues: Probable nicotinate-nucleotide adenylyltransferase (217 aa).

Belongs to the NadD family.

The enzyme catalyses nicotinate beta-D-ribonucleotide + ATP + H(+) = deamido-NAD(+) + diphosphate. It participates in cofactor biosynthesis; NAD(+) biosynthesis; deamido-NAD(+) from nicotinate D-ribonucleotide: step 1/1. In terms of biological role, catalyzes the reversible adenylation of nicotinate mononucleotide (NaMN) to nicotinic acid adenine dinucleotide (NaAD). This is Probable nicotinate-nucleotide adenylyltransferase from Moorella thermoacetica (strain ATCC 39073 / JCM 9320).